A 447-amino-acid chain; its full sequence is Tubulin beta-5 chain (447 aa).

Positions 11, 69, 138, 142, 143, 144, 204, and 226 each coordinate GTP. Residue Glu69 coordinates Mg(2+). A disordered region spans residues 424 to 447; it reads QYQDATAEEEGEFDEDEELDDAMG. A compositionally biased stretch (acidic residues) spans 429–447; that stretch reads TAEEEGEFDEDEELDDAMG.

Belongs to the tubulin family. In terms of assembly, dimer of alpha and beta chains. A typical microtubule is a hollow water-filled tube with an outer diameter of 25 nm and an inner diameter of 15 nM. Alpha-beta heterodimers associate head-to-tail to form protofilaments running lengthwise along the microtubule wall with the beta-tubulin subunit facing the microtubule plus end conferring a structural polarity. Microtubules usually have 13 protofilaments but different protofilament numbers can be found in some organisms and specialized cells. It depends on Mg(2+) as a cofactor.

The protein resides in the cytoplasm. Its subcellular location is the cytoskeleton. In terms of biological role, tubulin is the major constituent of microtubules, a cylinder consisting of laterally associated linear protofilaments composed of alpha- and beta-tubulin heterodimers. Microtubules grow by the addition of GTP-tubulin dimers to the microtubule end, where a stabilizing cap forms. Below the cap, tubulin dimers are in GDP-bound state, owing to GTPase activity of alpha-tubulin. The sequence is that of Tubulin beta-5 chain (TUBB5) from Ectocarpus variabilis (Brown alga).